The sequence spans 148 residues: Lysozyme C (148 aa).

The signal sequence occupies residues 1–18 (MKAVIILGLVLLSVTVQG). Positions 19 to 148 (KIFERCELAR…VSQYVQGCGV (130 aa)) constitute a C-type lysozyme domain. 4 disulfides stabilise this stretch: Cys24–Cys146, Cys48–Cys134, Cys83–Cys99, and Cys95–Cys113. Catalysis depends on residues Glu53 and Asp71.

Belongs to the glycosyl hydrolase 22 family. Monomer.

Its subcellular location is the secreted. It carries out the reaction Hydrolysis of (1-&gt;4)-beta-linkages between N-acetylmuramic acid and N-acetyl-D-glucosamine residues in a peptidoglycan and between N-acetyl-D-glucosamine residues in chitodextrins.. In terms of biological role, lysozymes have primarily a bacteriolytic function; those in tissues and body fluids are associated with the monocyte-macrophage system and enhance the activity of immunoagents. This is Lysozyme C (LYZ) from Miopithecus talapoin (Angolan talapoin).